A 376-amino-acid chain; its full sequence is Probable transcription factor At1g61730 (376 aa).

Residues 1–150 (MTKKLNPLED…RVKKDEESVK (150 aa)) form a disordered region. Residues 17–40 (SDEDDVETSEAGEASDDSSSSEED) show a composition bias toward acidic residues. Serine 49 bears the Phosphoserine mark. Positions 49–72 (SPSATTAAAPPAKSTAVSTAADSD) are enriched in low complexity. Residues 73 to 83 (SGSETETDSDS) show a composition bias toward acidic residues. A compositionally biased stretch (polar residues) spans 87 to 103 (NPPNSGSGKTIALNTVN).

Belongs to the GeBP family. Interacts with DEK3.

In Arabidopsis thaliana (Mouse-ear cress), this protein is Probable transcription factor At1g61730.